The primary structure comprises 315 residues: Ribosomal RNA small subunit methyltransferase H (315 aa).

S-adenosyl-L-methionine is bound by residues 37 to 39 (GGH), aspartate 57, phenylalanine 83, aspartate 105, and glutamine 112.

It belongs to the methyltransferase superfamily. RsmH family.

Its subcellular location is the cytoplasm. The catalysed reaction is cytidine(1402) in 16S rRNA + S-adenosyl-L-methionine = N(4)-methylcytidine(1402) in 16S rRNA + S-adenosyl-L-homocysteine + H(+). In terms of biological role, specifically methylates the N4 position of cytidine in position 1402 (C1402) of 16S rRNA. The polypeptide is Ribosomal RNA small subunit methyltransferase H (Pseudomonas entomophila (strain L48)).